The following is a 172-amino-acid chain: Shikimate kinase (172 aa).

An ATP-binding site is contributed by 14-19 (GAGKST). Ser-18 contacts Mg(2+). 3 residues coordinate substrate: Asp-36, Arg-60, and Gly-82. Residue Arg-120 participates in ATP binding. Arg-139 contacts substrate. Gln-156 is an ATP binding site.

The protein belongs to the shikimate kinase family. In terms of assembly, monomer. Mg(2+) serves as cofactor.

The protein resides in the cytoplasm. It carries out the reaction shikimate + ATP = 3-phosphoshikimate + ADP + H(+). It participates in metabolic intermediate biosynthesis; chorismate biosynthesis; chorismate from D-erythrose 4-phosphate and phosphoenolpyruvate: step 5/7. Functionally, catalyzes the specific phosphorylation of the 3-hydroxyl group of shikimic acid using ATP as a cosubstrate. The chain is Shikimate kinase from Aliivibrio salmonicida (strain LFI1238) (Vibrio salmonicida (strain LFI1238)).